We begin with the raw amino-acid sequence, 263 residues long: Small ribosomal subunit protein eS4, Y isoform 1 (263 aa).

The S4 RNA-binding domain maps to 42 to 104 (LPLIIFLRNR…TGEHFRLVYD (63 aa)).

It belongs to the eukaryotic ribosomal protein eS4 family.

The sequence is that of Small ribosomal subunit protein eS4, Y isoform 1 (RPS4Y1) from Monodelphis domestica (Gray short-tailed opossum).